The primary structure comprises 486 residues: MTTFYTVISWLSVFGYWLLIAGVTLRILMKRRAVPSAMAWLLIIYILPLVGIIAYLSFGELHLGKRRAERAKAMWPSTARWLSELKECQHIFANSNSEVATPLFQLCERRQGINGVKGNQLQLLTTTDDTLKALVRDIELARHNIEMVFYIWQPGGLVDQVAESLMAAARRGVHCRLLLDSAGSKQFFRSPYPAMMRNAGIEVVEALKVNVFRMFLRRMDLRQHRKIVLIDNYVAYTGSMNMVDPRFFKQDAGVGQWIDMMARMEGPVATTLGIVYACDWEIETGKRILPPPPDANIMPFEEETGHTIQVIASGPGFPEEMIHQALLTAVYAAREQLIMTTPYFVPSDDLLHAICTAAQRGVDVSIIVPRENDSMMVRWASRAFFTELLNAGVKIYQFEGGLLHSKSVLVDGQLSLVGTVNLDMRSLWLNFEITLVIDDDGFGADLAQVQDDYIARSALLDGERWNKRPLWHRVTERLFYFFSPLL.

Transmembrane regions (helical) follow at residues 3–23 (TFYTVISWLSVFGYWLLIAGV) and 38–58 (MAWLLIIYILPLVGIIAYLSF). 2 consecutive PLD phosphodiesterase domains span residues 219–246 (MDLRQHRKIVLIDNYVAYTGSMNMVDPR) and 399–426 (EGGLLHSKSVLVDGQLSLVGTVNLDMRS). Catalysis depends on residues His224, Lys226, Asp231, His404, Lys406, and Asp411.

This sequence belongs to the phospholipase D family. Cardiolipin synthase subfamily. ClsA sub-subfamily.

It localises to the cell inner membrane. It catalyses the reaction 2 a 1,2-diacyl-sn-glycero-3-phospho-(1'-sn-glycerol) = a cardiolipin + glycerol. Functionally, catalyzes the reversible phosphatidyl group transfer from one phosphatidylglycerol molecule to another to form cardiolipin (CL) (diphosphatidylglycerol) and glycerol. In Yersinia pseudotuberculosis serotype IB (strain PB1/+), this protein is Cardiolipin synthase A.